Reading from the N-terminus, the 140-residue chain is Nucleoside diphosphate kinase (140 aa).

ATP-binding residues include K11, F59, R87, T93, R104, and N114. The Pros-phosphohistidine intermediate role is filled by H117.

It belongs to the NDK family. In terms of assembly, homotetramer. The cofactor is Mg(2+).

It localises to the cytoplasm. The catalysed reaction is a 2'-deoxyribonucleoside 5'-diphosphate + ATP = a 2'-deoxyribonucleoside 5'-triphosphate + ADP. It catalyses the reaction a ribonucleoside 5'-diphosphate + ATP = a ribonucleoside 5'-triphosphate + ADP. Functionally, major role in the synthesis of nucleoside triphosphates other than ATP. The ATP gamma phosphate is transferred to the NDP beta phosphate via a ping-pong mechanism, using a phosphorylated active-site intermediate. The protein is Nucleoside diphosphate kinase of Rhodopseudomonas palustris (strain HaA2).